Reading from the N-terminus, the 728-residue chain is Polyribonucleotide nucleotidyltransferase (728 aa).

D488 and D494 together coordinate Mg(2+). The 60-residue stretch at P555 to I614 folds into the KH domain. The S1 motif domain occupies G624–K692. The tract at residues I702 to Q728 is disordered. Positions A710–A721 are enriched in low complexity.

It belongs to the polyribonucleotide nucleotidyltransferase family. Requires Mg(2+) as cofactor.

Its subcellular location is the cytoplasm. The enzyme catalyses RNA(n+1) + phosphate = RNA(n) + a ribonucleoside 5'-diphosphate. In terms of biological role, involved in mRNA degradation. Catalyzes the phosphorolysis of single-stranded polyribonucleotides processively in the 3'- to 5'-direction. The chain is Polyribonucleotide nucleotidyltransferase from Cupriavidus pinatubonensis (strain JMP 134 / LMG 1197) (Cupriavidus necator (strain JMP 134)).